The following is a 134-amino-acid chain: ATP synthase epsilon chain (134 aa).

It belongs to the ATPase epsilon chain family. In terms of assembly, F-type ATPases have 2 components, CF(1) - the catalytic core - and CF(0) - the membrane proton channel. CF(1) has five subunits: alpha(3), beta(3), gamma(1), delta(1), epsilon(1). CF(0) has three main subunits: a, b and c.

Its subcellular location is the cell membrane. Functionally, produces ATP from ADP in the presence of a proton gradient across the membrane. The chain is ATP synthase epsilon chain from Alkaliphilus oremlandii (strain OhILAs) (Clostridium oremlandii (strain OhILAs)).